The sequence spans 367 residues: 4-hydroxy-3-methylbut-2-en-1-yl diphosphate synthase (flavodoxin) (367 aa).

[4Fe-4S] cluster-binding residues include Cys-268, Cys-271, Cys-303, and Glu-310.

Belongs to the IspG family. Requires [4Fe-4S] cluster as cofactor.

The catalysed reaction is (2E)-4-hydroxy-3-methylbut-2-enyl diphosphate + oxidized [flavodoxin] + H2O + 2 H(+) = 2-C-methyl-D-erythritol 2,4-cyclic diphosphate + reduced [flavodoxin]. It participates in isoprenoid biosynthesis; isopentenyl diphosphate biosynthesis via DXP pathway; isopentenyl diphosphate from 1-deoxy-D-xylulose 5-phosphate: step 5/6. Converts 2C-methyl-D-erythritol 2,4-cyclodiphosphate (ME-2,4cPP) into 1-hydroxy-2-methyl-2-(E)-butenyl 4-diphosphate. The chain is 4-hydroxy-3-methylbut-2-en-1-yl diphosphate synthase (flavodoxin) from Shouchella clausii (strain KSM-K16) (Alkalihalobacillus clausii).